We begin with the raw amino-acid sequence, 973 residues long: Protein HypA (973 aa).

The chain is Protein HypA (hypA) from Clostridium perfringens (strain 13 / Type A).